A 141-amino-acid polypeptide reads, in one-letter code: Drosulfakinins (141 aa).

Positions 1–33 (MGLRSCTHLATLFMTLWALAFCFLVVVPIPAQT) are cleaved as a signal peptide. Residues 34–73 (TSLQNAKDDRRLQELESKIGAESDQPNANLVGPSFSRFGD) constitute a propeptide that is removed on maturation. Residues 51–72 (KIGAESDQPNANLVGPSFSRFG) are disordered. Phe-82 is modified (phenylalanine amide). Residues 86–111 (VPLISRPMIPIELDLLMDNDDERTKA) constitute a propeptide that is removed on maturation. Sulfotyrosine is present on Tyr-117. Residue Phe-122 is modified to Phenylalanine amide. Sulfotyrosine is present on Tyr-134. The residue at position 139 (Phe-139) is a Phenylalanine amide.

It belongs to the gastrin/cholecystokinin family.

Its subcellular location is the secreted. Its function is as follows. Drosulfakinin-0 (DSK 0) plays diverse biological roles including regulating gut muscle contraction in adults but not in larvae. This is Drosulfakinins from Drosophila mauritiana (Fruit fly).